The chain runs to 441 residues: Ribulose bisphosphate carboxylase large chain (441 aa).

An N6,N6,N6-trimethyllysine modification is found at Lys5. 2 residues coordinate substrate: Asn114 and Thr164. Lys166 functions as the Proton acceptor in the catalytic mechanism. Lys168 serves as a coordination point for substrate. Residues Lys192, Asp194, and Glu195 each contribute to the Mg(2+) site. Lys192 bears the N6-carboxylysine mark. The Proton acceptor role is filled by His285. Positions 286, 318, and 370 each coordinate substrate.

Belongs to the RuBisCO large chain family. Type I subfamily. In terms of assembly, heterohexadecamer of 8 large chains and 8 small chains; disulfide-linked. The disulfide link is formed within the large subunit homodimers. The cofactor is Mg(2+). The disulfide bond which can form in the large chain dimeric partners within the hexadecamer appears to be associated with oxidative stress and protein turnover.

The protein resides in the plastid. The protein localises to the chloroplast. The enzyme catalyses 2 (2R)-3-phosphoglycerate + 2 H(+) = D-ribulose 1,5-bisphosphate + CO2 + H2O. It catalyses the reaction D-ribulose 1,5-bisphosphate + O2 = 2-phosphoglycolate + (2R)-3-phosphoglycerate + 2 H(+). Its function is as follows. RuBisCO catalyzes two reactions: the carboxylation of D-ribulose 1,5-bisphosphate, the primary event in carbon dioxide fixation, as well as the oxidative fragmentation of the pentose substrate in the photorespiration process. Both reactions occur simultaneously and in competition at the same active site. The chain is Ribulose bisphosphate carboxylase large chain from Pellaea andromedifolia (Coffee fern).